Consider the following 535-residue polypeptide: MFSWLGNDDRRKKDPEVFQTVSDGLKKLYKTKLLPLEEYYRFHEFHSPALEDADFDNKPMVLLVGQYSTGKTTFIRYLLEQDFPGMRIGPEPTTDSFIAVMQGDVEGIIPGNALVVDPKKPFRKLNAFGNAFLNRFVCAQLPNAVLESISVIDTPGILSGEKQRISRGYDFAAVLEWFAERVDRIILLFDAHKLDISDEFSEVIKALKNHEDKMRVVLNKADQIETQQLMRVYGALMWSLGKIVNTPEVIRVYIGSFWSHPLLIPDNRKLFEAEEQDLFRDIQSLPRNAALRKLNDLIKRARLAKVHAYIISSLKKEMPSVFGKDTKKKELVNNLAEIYGRIEREHQISPGDFPNLKRMQDQLQAQDFSKFQPLKSKLLEVVDDMLAHDIAQLMVLVRQEETQRPVQMVKGGAFEGTLQGPFGHGYGEGAGEGIDDAEWVVARDKPMYDEIFYTLSPVDGKITGANAKKEMVRSKLPNSVLGKIWKLADIDKDGMLDDEEFALANHLIKVKLEGHELPSELPAHLLPPSKRKVSE.

Met-1 carries the post-translational modification N-acetylmethionine. Residues Phe-55–Pro-286 enclose the Dynamin-type G domain. The interval Gly-65–Thr-72 is G1 motif. Gly-65–Thr-72 contributes to the ATP binding site. The segment at Glu-91–Pro-92 is G2 motif. The segment at Asp-153 to Gly-156 is G3 motif. Positions Asp-198–Gln-227 form a coiled coil. The segment at Asn-219–Asp-222 is G4 motif. ATP is bound at residue Lys-220. Position 243 (Ile-243) is a region of interest, G5 motif. Residue Trp-258 participates in ATP binding. A Glycyl lysine isopeptide (Lys-Gly) (interchain with G-Cter in SUMO) cross-link involves residue Lys-315. Phosphoserine is present on residues Ser-349 and Ser-456. Residues Asp-444–Lys-532 form the EH domain. Residues Leu-476–Lys-511 form the EF-hand domain. Residues Asp-489, Asp-491, Asp-493, Met-495, and Glu-500 each coordinate Ca(2+). Lys-511 participates in a covalent cross-link: Glycyl lysine isopeptide (Lys-Gly) (interchain with G-Cter in SUMO).

It belongs to the TRAFAC class dynamin-like GTPase superfamily. Dynamin/Fzo/YdjA family. EHD subfamily. In terms of assembly, homooligomer. Heterooligomer with EHD1. Heterooligomer with EHD2 and EHD4; ATP-binding is required for heterooligomerization. Interacts with PACSIN1. Interacts with PACSIN2. Interacts (via EH domain) with MICALL1. Interacts (via EH domain) with RAB11FIP2. Interacts with ANK2. Interacts with CACNA1GG and CACNA1H. As to expression, strong expression seen in the kidney, brain and liver. In the kidney, expressed exclusively by glomerular endothelial cells; at protein level. Expressed in skeletal muscle neuromuscular junction perisynaptic region; at protein level.

The protein localises to the recycling endosome membrane. The protein resides in the cell membrane. It is found in the cell projection. Its subcellular location is the cilium membrane. It localises to the cytoplasmic vesicle. Its function is as follows. ATP- and membrane-binding protein that controls membrane reorganization/tubulation upon ATP hydrolysis. In vitro causes tubulation of endocytic membranes. Binding to phosphatidic acid induces its membrane tubulation activity. Plays a role in endocytic transport. Involved in early endosome to recycling endosome compartment (ERC), retrograde early endosome to Golgi, and endosome to plasma membrane (rapid recycling) protein transport. Involved in the regulation of Golgi maintenance and morphology. Involved in the recycling of internalized D1 dopamine receptor. Plays a role in cardiac protein trafficking probably implicating ANK2. Involved in the ventricular membrane targeting of SLC8A1 and CACNA1C and probably the atrial membrane localization of CACNA1GG and CACNA1H implicated in the regulation of atrial myocyte excitability and cardiac conduction. In conjunction with EHD4 may be involved in endocytic trafficking of KDR/VEGFR2 implicated in control of glomerular function. Involved in the rapid recycling of integrin beta-3 implicated in cell adhesion maintenance. Involved in the unidirectional retrograde dendritic transport of endocytosed BACE1 and in efficient sorting of BACE1 to axons implicating a function in neuronal APP processing. Plays a role in the formation of the ciliary vesicle, an early step in cilium biogenesis; possibly sharing redundant functions with Ehd1. This chain is EH domain-containing protein 3, found in Mus musculus (Mouse).